Here is a 261-residue protein sequence, read N- to C-terminus: Guanine nucleotide exchange factor BopE (261 aa).

This sequence belongs to the GEF (guanine exchange factor) SopE family. In terms of assembly, monomer. Interacts with human CDC42.

Its subcellular location is the secreted. Its function is as follows. Activator for both CDC42 and RAC1 by directly interacting with these Rho GTPases and acting as a guanine nucleotide exchange factor (GEF). This activation results in actin cytoskeleton rearrangements and stimulates membrane ruffling, thus promoting bacterial entry into non-phagocytic cells. The chain is Guanine nucleotide exchange factor BopE (bopE) from Burkholderia pseudomallei (strain 1710b).